Here is a 127-residue protein sequence, read N- to C-terminus: Small ribosomal subunit protein eS8 (127 aa).

A disordered region spans residues 1 to 25 (MTIFQGKSGKKPTGGNLKQAKKKRR).

This sequence belongs to the eukaryotic ribosomal protein eS8 family. Part of the 30S ribosomal subunit.

This chain is Small ribosomal subunit protein eS8, found in Thermoplasma volcanium (strain ATCC 51530 / DSM 4299 / JCM 9571 / NBRC 15438 / GSS1).